A 1687-amino-acid polypeptide reads, in one-letter code: Gag-Pol polyprotein (1687 aa).

Residue Gly-2 is the site of N-myristoyl glycine; by host attachment. Disordered regions lie at residues 107–126 (GQDN…SRLP), 136–195 (LLSE…STVA), 420–447 (HKRE…DRRQ), and 466–485 (GRQA…EGRP). Positions 108-111 (QDNG) match the PTAP/PSAP motif motif. Positions 139 to 153 (EPPPYPTSPPPPPAP) are enriched in pro residues. A PPXY motif motif is present at residues 140 to 143 (PPPY). Residues 408 to 453 (LQDLIKEAEKVYHKRETEEEKQEREKKETEERERRRDRRQEKNLTK) adopt a coiled-coil conformation. A CCHC-type zinc finger spans residues 490-507 (DQCAYCKERGHWARECPR). A Peptidase A2 domain is found at 544–614 (TEFLVDTGAE…CPAPLLGRDL (71 aa)). The active-site Protease; shared with dimeric partner is the Asp-549. Residues 721–912 (LDLGILVPCQ…EEVTYLGYLL (192 aa)) form the Reverse transcriptase domain. Residues Asp-789, Asp-863, Asp-864, Asp-1162, Glu-1200, Asp-1221, and Asp-1291 each contribute to the Mg(2+) site. The RNase H type-1 domain occupies 1153 to 1299 (LPGVPAWYTD…ADEAAKQAAQ (147 aa)). Residues 1339–1377 (HQLTHLGPDKLLQLVGRTSFHIPNLQSVVREITSKCQVC) form an HHCC-type zinc finger. The 159-residue stretch at 1394–1552 (RGDRPGVYWE…TPYEILHGGP (159 aa)) folds into the Integrase catalytic domain. Mg(2+)-binding residues include Asp-1405 and Asp-1464.

Homohexamer; further associates as homomultimer. The virus core is composed of a lattice formed from hexagonal rings, each containing six capsid monomers. As to quaternary structure, interacts (via PPXY motif) with host NEDD4. Interacts (via PSAP motif) with host TSG101. In terms of assembly, the reverse transcriptase is a monomer (Potential). Interacts (via RNase domains) with host release factor ETF1; this interaction is essential for translational readthrough of amber codon between viral gag and pol genes, as well as for viral replication. Homodimer. Mg(2+) is required as a cofactor. In terms of processing, specific enzymatic cleavages by the viral protease yield mature proteins. The protease is released by autocatalytic cleavage. The polyprotein is cleaved during and after budding, this process is termed maturation. Post-translationally, phosphorylated on serine residues.

The protein localises to the virion. The protein resides in the host cell membrane. It is found in the host late endosome membrane. It localises to the host endosome. Its subcellular location is the host multivesicular body. The protein localises to the host cytoplasm. The catalysed reaction is DNA(n) + a 2'-deoxyribonucleoside 5'-triphosphate = DNA(n+1) + diphosphate. It catalyses the reaction Endonucleolytic cleavage to 5'-phosphomonoester.. Its activity is regulated as follows. Protease: Most efficiently inhibited by Amprenavir, which is able to block Gag-Pol processing in infected cells. In terms of biological role, plays a role in budding and is processed by the viral protease during virion maturation outside the cell. During budding, it recruits, in a PPXY-dependent or independent manner, Nedd4-like ubiquitin ligases that conjugate ubiquitin molecules to Gag-Pol, or to Gag-Pol binding host factors. Interaction with HECT ubiquitin ligases probably links the viral protein to the host ESCRT pathway and facilitates release. Functionally, targets Gag and gag-pol polyproteins to the plasma membrane via a multipartite membrane binding signal, that includes its myristoylated N-terminus. Also mediates nuclear localization of the pre-integration complex. Its function is as follows. Constituent of the pre-integration complex (PIC) which tethers the latter to mitotic chromosomes. This allows the integration of the viral genome into the host DNA. Forms the spherical core of the virion that encapsulates the genomic RNA-nucleocapsid complex. In terms of biological role, involved in the packaging and encapsidation of two copies of the genome. Binds with high affinity to conserved UCUG elements within the packaging signal, located near the 5'-end of the genome. This binding is dependent on genome dimerization. Acts as a nucleic acid chaperone which is involved in rearrangement of nucleic acid secondary structures during gRNA retrotranscription. Functionally, protease: The aspartyl protease mediates proteolytic cleavages of Gag and Gag-Pol polyproteins during or shortly after the release of the virion from the plasma membrane. Cleavages take place as an ordered, step-wise cascade to yield mature proteins. This process is called maturation. Displays maximal activity during the budding process just prior to particle release from the cell. Its function is as follows. Reverse transcriptase/ribonuclease H: RT is a multifunctional enzyme that converts the viral dimeric RNA genome into dsDNA in the cytoplasm, shortly after virus entry into the cell. This enzyme displays a DNA polymerase activity that can copy either DNA or RNA templates, and a ribonuclease H (RNase H) activity that cleaves the RNA strand of RNA-DNA heteroduplexes in a partially processive 3' to 5' endonucleasic mode. Conversion of viral genomic RNA into dsDNA requires many steps. A tRNA binds to the primer-binding site (PBS) situated at the 5' end of the viral RNA. RT uses the 3' end of the tRNA primer to perform a short round of RNA-dependent minus-strand DNA synthesis. The reading proceeds through the U5 region and ends after the repeated (R) region which is present at both ends of viral RNA. The portion of the RNA-DNA heteroduplex is digested by the RNase H, resulting in a ssDNA product attached to the tRNA primer. This ssDNA/tRNA hybridizes with the identical R region situated at the 3' end of viral RNA. This template exchange, known as minus-strand DNA strong stop transfer, can be either intra- or intermolecular. RT uses the 3' end of this newly synthesized short ssDNA to perform the RNA-dependent minus-strand DNA synthesis of the whole template. RNase H digests the RNA template except for a polypurine tract (PPT) situated at the 5' end of the genome. It is not clear if both polymerase and RNase H activities are simultaneous. RNase H probably can proceed both in a polymerase-dependent (RNA cut into small fragments by the same RT performing DNA synthesis) and a polymerase-independent mode (cleavage of remaining RNA fragments by free RTs). Secondly, RT performs DNA-directed plus-strand DNA synthesis using the PPT that has not been removed by RNase H as primers. PPT and tRNA primers are then removed by RNase H. The 3' and 5' ssDNA PBS regions hybridize to form a circular dsDNA intermediate. Strand displacement synthesis by RT to the PBS and PPT ends produces a blunt ended, linear dsDNA copy of the viral genome that includes long terminal repeats (LTRs) at both ends. Catalyzes viral DNA integration into the host chromosome, by performing a series of DNA cutting and joining reactions. This enzyme activity takes place after virion entry into a cell and reverse transcription of the RNA genome in dsDNA. The first step in the integration process is 3' processing. This step requires a complex comprising the viral genome, matrix protein and integrase. This complex is called the pre-integration complex (PIC). The integrase protein removes 2 nucleotides from each 3' end of the viral DNA, leaving recessed CA OH's at the 3' ends. In the second step that requires cell division, the PIC enters cell nucleus. In the third step, termed strand transfer, the integrase protein joins the previously processed 3' ends to the 5' ends of strands of target cellular DNA at the site of integration. The last step is viral DNA integration into host chromosome. This Phascolarctos cinereus (Koala) protein is Gag-Pol polyprotein (pro-pol).